A 634-amino-acid chain; its full sequence is Chaperone protein DnaK (634 aa).

The residue at position 197 (Thr-197) is a Phosphothreonine; by autocatalysis. The segment covering 515–528 has biased composition (basic and acidic residues); it reads LHKEDDKKRKESVD. 2 disordered regions span residues 515-536 and 595-634; these read LHKE…ADAI and YKAA…AEVE. The segment covering 603–615 has biased composition (gly residues); sequence NAGGTAGGNGNAG.

The protein belongs to the heat shock protein 70 family.

In terms of biological role, acts as a chaperone. The chain is Chaperone protein DnaK from Campylobacter hominis (strain ATCC BAA-381 / DSM 21671 / CCUG 45161 / LMG 19568 / NCTC 13146 / CH001A).